Reading from the N-terminus, the 303-residue chain is MIKQRTLKNIIRATGVGLHSGEKVYLTLKPAPVNTGIVFCRADLDPVVQIPARAENVGDTTLSTTLVNGDVKVDTVEHLLSAMAGLGIDNAYVELSASEVPIMDGSAGPFVFLIQSAGLEEQDAPKKFIRILREVTVEEGGKRATFVPFEGFKVSFEIDFDHPVFRDRTQSASVDFSSTSFVKEVSRARTFGFMSDIEYLRKHNLALGGSVENAIVVDKDGVLNEDGLRYEDEFVKHKILDAIGDLYLLGNSLIGEFRGFKSGHALNNRLLRALIEQTDAWEVVTFEDASTAPISYMRPVAAV.

Positions 78, 237, and 241 each coordinate Zn(2+). Residue histidine 264 is the Proton donor of the active site.

This sequence belongs to the LpxC family. Zn(2+) serves as cofactor.

The catalysed reaction is a UDP-3-O-[(3R)-3-hydroxyacyl]-N-acetyl-alpha-D-glucosamine + H2O = a UDP-3-O-[(3R)-3-hydroxyacyl]-alpha-D-glucosamine + acetate. Its pathway is glycolipid biosynthesis; lipid IV(A) biosynthesis; lipid IV(A) from (3R)-3-hydroxytetradecanoyl-[acyl-carrier-protein] and UDP-N-acetyl-alpha-D-glucosamine: step 2/6. Functionally, catalyzes the hydrolysis of UDP-3-O-myristoyl-N-acetylglucosamine to form UDP-3-O-myristoylglucosamine and acetate, the committed step in lipid A biosynthesis. The protein is UDP-3-O-acyl-N-acetylglucosamine deacetylase of Pseudomonas syringae pv. tomato (strain ATCC BAA-871 / DC3000).